The following is a 137-amino-acid chain: Large-conductance mechanosensitive channel (137 aa).

2 consecutive transmembrane segments (helical) span residues 10–30 (FAMRGNVVDLAVGVIIGAAFG) and 76–96 (GVFLQTVFDFVIVAFAIFMAI).

The protein belongs to the MscL family. As to quaternary structure, homopentamer.

Its subcellular location is the cell inner membrane. Its function is as follows. Channel that opens in response to stretch forces in the membrane lipid bilayer. May participate in the regulation of osmotic pressure changes within the cell. This Erwinia tasmaniensis (strain DSM 17950 / CFBP 7177 / CIP 109463 / NCPPB 4357 / Et1/99) protein is Large-conductance mechanosensitive channel.